Consider the following 322-residue polypeptide: Crystallin J1A (322 aa).

It belongs to the ADP-ribosylglycohydrolase family. J1 crystallin subfamily. As to expression, expressed in the rhopalia. Present in both the large and small eyes.

The chain is Crystallin J1A from Tripedalia cystophora (Jellyfish).